Consider the following 474-residue polypeptide: 3-isopropylmalate dehydratase large subunit (474 aa).

The [4Fe-4S] cluster site is built by Cys-355, Cys-415, and Cys-418.

It belongs to the aconitase/IPM isomerase family. LeuC type 1 subfamily. In terms of assembly, heterodimer of LeuC and LeuD. [4Fe-4S] cluster is required as a cofactor.

It catalyses the reaction (2R,3S)-3-isopropylmalate = (2S)-2-isopropylmalate. The protein operates within amino-acid biosynthesis; L-leucine biosynthesis; L-leucine from 3-methyl-2-oxobutanoate: step 2/4. Its function is as follows. Catalyzes the isomerization between 2-isopropylmalate and 3-isopropylmalate, via the formation of 2-isopropylmaleate. This is 3-isopropylmalate dehydratase large subunit from Shewanella sp. (strain W3-18-1).